Reading from the N-terminus, the 183-residue chain is uncharacterized protein (183 aa).

A helical membrane pass occupies residues 153–175; the sequence is LLYVFIRLFAGCLKVFRLCILWL.

The protein resides in the membrane. This is an uncharacterized protein from Saccharomyces cerevisiae (strain ATCC 204508 / S288c) (Baker's yeast).